Here is a 98-residue protein sequence, read N- to C-terminus: NADH-ubiquinone oxidoreductase chain 4L (98 aa).

A run of 3 helical transmembrane segments spans residues 1–21 (MTPT…GLTF), 26–46 (LLSA…SMAL), and 59–79 (APML…ALLV).

It belongs to the complex I subunit 4L family. In terms of assembly, core subunit of respiratory chain NADH dehydrogenase (Complex I) which is composed of 45 different subunits.

It localises to the mitochondrion inner membrane. It catalyses the reaction a ubiquinone + NADH + 5 H(+)(in) = a ubiquinol + NAD(+) + 4 H(+)(out). Core subunit of the mitochondrial membrane respiratory chain NADH dehydrogenase (Complex I) which catalyzes electron transfer from NADH through the respiratory chain, using ubiquinone as an electron acceptor. Part of the enzyme membrane arm which is embedded in the lipid bilayer and involved in proton translocation. The chain is NADH-ubiquinone oxidoreductase chain 4L (mt-nd4l) from Danio rerio (Zebrafish).